The chain runs to 252 residues: Aspartate/glutamate leucyltransferase (252 aa).

It belongs to the R-transferase family. Bpt subfamily.

It localises to the cytoplasm. It carries out the reaction N-terminal L-glutamyl-[protein] + L-leucyl-tRNA(Leu) = N-terminal L-leucyl-L-glutamyl-[protein] + tRNA(Leu) + H(+). The catalysed reaction is N-terminal L-aspartyl-[protein] + L-leucyl-tRNA(Leu) = N-terminal L-leucyl-L-aspartyl-[protein] + tRNA(Leu) + H(+). Functionally, functions in the N-end rule pathway of protein degradation where it conjugates Leu from its aminoacyl-tRNA to the N-termini of proteins containing an N-terminal aspartate or glutamate. The protein is Aspartate/glutamate leucyltransferase of Polynucleobacter necessarius subsp. necessarius (strain STIR1).